We begin with the raw amino-acid sequence, 427 residues long: 2-oxoglutarate and iron-dependent oxygenase JMJD4 (427 aa).

The JmjC domain maps to 147-306 (SLVNDLEDIF…NMWHFLQQEL (160 aa)). Fe cation-binding residues include His-194, Asp-196, and His-274.

This sequence belongs to the JMJD6 family. As to quaternary structure, interacts with ETF1. Interacts with the ETF1-GSPT1 complex. The cofactor is Fe(2+).

The protein resides in the cytoplasm. It carries out the reaction L-lysyl-[protein] + 2-oxoglutarate + O2 = 4-hydroxy-L-lysyl-[protein] + succinate + CO2. In terms of biological role, catalyzes the 2-oxoglutarate and iron-dependent C4-lysyl hydroxylation of ETF1 at 'Lys-63' thereby promoting the translational termination efficiency of ETF1. Not essential for embryonic stem cell (ESC) maintenance and the embryonic and postnatal development. The chain is 2-oxoglutarate and iron-dependent oxygenase JMJD4 (Jmjd4) from Mus musculus (Mouse).